The primary structure comprises 248 residues: Carbohydrate deacetylase 2 (248 aa).

Mg(2+) is bound by residues His-59 and His-123.

It belongs to the YdjC deacetylase family. As to quaternary structure, homodimer. It depends on Mg(2+) as a cofactor.

Probably catalyzes the deacetylation of acetylated carbohydrates an important step in the degradation of oligosaccharides. This chain is Carbohydrate deacetylase 2, found in Listeria innocua serovar 6a (strain ATCC BAA-680 / CLIP 11262).